The following is a 531-amino-acid chain: Transcription factor LG2 (531 aa).

Disordered regions lie at residues 115-154 (RHQQ…ASSA) and 195-220 (LHGG…KLVD). The segment covering 116–154 (HQQQLHSGNSQSVGSTGTDSSSAQNTMSQMELVSPASSA) has biased composition (polar residues). Residues 220 to 264 (DAKTERRLAQNREAARKSRLRKKAYVQQLETSRIRLQQVEHELQR) enclose the bZIP domain. The tract at residues 222 to 242 (KTERRLAQNREAARKSRLRKK) is basic motif. The short motif at 224–231 (ERRLAQNR) is the Nuclear localization signal element. Residues 248-262 (LETSRIRLQQVEHEL) form a leucine-zipper region. Residues 285–499 (AAMFDMEYAR…RALSNLWASR (215 aa)) enclose the DOG1 domain.

Belongs to the bZIP family. As to quaternary structure, binds DNA as a dimer. In terms of tissue distribution, expression in meristem/developing ligule regions.

Its subcellular location is the nucleus. Required for the formation of the blade-sheath boundary in leaves. Promotes flowering. The polypeptide is Transcription factor LG2 (Zea mays (Maize)).